Consider the following 143-residue polypeptide: uncharacterized protein (143 aa).

Residues 65–85 (LVWMLVGTIVLSLDIIFPALV) traverse the membrane as a helical segment.

It localises to the membrane. This is an uncharacterized protein from Saccharomyces cerevisiae (strain ATCC 204508 / S288c) (Baker's yeast).